Consider the following 720-residue polypeptide: Phosphate acetyltransferase (720 aa).

The phosphate acetyltransferase stretch occupies residues 389–720 (AFRHELVQKS…LEAKAAALAS (332 aa)).

It in the N-terminal section; belongs to the CobB/CobQ family. This sequence in the C-terminal section; belongs to the phosphate acetyltransferase and butyryltransferase family. As to quaternary structure, homohexamer.

The protein localises to the cytoplasm. The enzyme catalyses acetyl-CoA + phosphate = acetyl phosphate + CoA. Its pathway is metabolic intermediate biosynthesis; acetyl-CoA biosynthesis; acetyl-CoA from acetate: step 2/2. In terms of biological role, involved in acetate metabolism. In Acinetobacter baylyi (strain ATCC 33305 / BD413 / ADP1), this protein is Phosphate acetyltransferase (pta).